A 177-amino-acid chain; its full sequence is CDP-archaeol synthase (177 aa).

5 helical membrane passes run 6–26 (LFAS…ACIF), 54–74 (CIFG…LVDF), 90–110 (VILA…GSFI), 124–144 (LLDQ…VAPI), and 148–168 (MIII…IIAY).

The protein belongs to the CDP-archaeol synthase family. The cofactor is Mg(2+).

Its subcellular location is the cell membrane. The enzyme catalyses 2,3-bis-O-(geranylgeranyl)-sn-glycerol 1-phosphate + CTP + H(+) = CDP-2,3-bis-O-(geranylgeranyl)-sn-glycerol + diphosphate. It participates in membrane lipid metabolism; glycerophospholipid metabolism. In terms of biological role, catalyzes the formation of CDP-2,3-bis-(O-geranylgeranyl)-sn-glycerol (CDP-archaeol) from 2,3-bis-(O-geranylgeranyl)-sn-glycerol 1-phosphate (DGGGP) and CTP. This reaction is the third ether-bond-formation step in the biosynthesis of archaeal membrane lipids. This is CDP-archaeol synthase from Methanocaldococcus jannaschii (strain ATCC 43067 / DSM 2661 / JAL-1 / JCM 10045 / NBRC 100440) (Methanococcus jannaschii).